The primary structure comprises 564 residues: Urocanate hydratase (564 aa).

NAD(+) is bound by residues 54-55 (GG), Gln132, 178-180 (GMG), Glu198, Arg203, 244-245 (NA), 269-273 (QTSAH), 279-280 (YL), and Tyr328. Cys416 is a catalytic residue. Residue Gly498 participates in NAD(+) binding.

The protein belongs to the urocanase family. As to quaternary structure, homodimer. NAD(+) is required as a cofactor.

It catalyses the reaction 4-imidazolone-5-propanoate = trans-urocanate + H2O. Its pathway is amino-acid degradation; L-histidine degradation into L-glutamate; N-formimidoyl-L-glutamate from L-histidine: step 2/3. This chain is Urocanate hydratase, found in Trifolium repens (Creeping white clover).